Consider the following 543-residue polypeptide: T-complex protein 1 subunit eta (543 aa).

Methionine 1 carries the N-acetylmethionine modification. Residue glycine 41 coordinates ADP. Glycine 41 contributes to the ATP binding site. Lysine 67 carries the N6-acetyllysine modification. Aspartate 92 contributes to the Mg(2+) binding site. The ADP site is built by glycine 93, threonine 94, threonine 95, serine 96, serine 164, and serine 165. Position 93 (glycine 93) interacts with ATP. Serine 96 contributes to the ATP binding site. Lysine 250 and lysine 320 each carry N6-acetyllysine. Residues arginine 398 and glycine 409 each contribute to the ATP site. Residue glycine 409 coordinates ADP. A Glycyl lysine isopeptide (Lys-Gly) (interchain with G-Cter in SUMO2) cross-link involves residue lysine 430. The ADP site is built by glutamate 494 and arginine 499. Arginine 499 provides a ligand contact to ATP. At arginine 535 the chain carries Omega-N-methylarginine.

It belongs to the TCP-1 chaperonin family. Component of the chaperonin-containing T-complex (TRiC), a hexadecamer composed of two identical back-to-back stacked rings enclosing a protein folding chamber. Each ring is made up of eight different subunits: TCP1/CCT1, CCT2, CCT3, CCT4, CCT5, CCT6A/CCT6, CCT7, CCT8. Interacts with PACRG. Interacts with DLEC1.

It localises to the cytoplasm. The enzyme catalyses ATP + H2O = ADP + phosphate + H(+). Its function is as follows. Component of the chaperonin-containing T-complex (TRiC), a molecular chaperone complex that assists the folding of actin, tubulin and other proteins upon ATP hydrolysis. The TRiC complex mediates the folding of WRAP53/TCAB1, thereby regulating telomere maintenance. The sequence is that of T-complex protein 1 subunit eta (CCT7) from Pongo abelii (Sumatran orangutan).